Reading from the N-terminus, the 603-residue chain is Elongation factor 4 (603 aa).

One can recognise a tr-type G domain in the interval 2–184 (NHIRNFSIIA…AIVHKMPAPR (183 aa)). GTP-binding positions include 14–19 (DHGKST) and 131–134 (NKMD).

Belongs to the TRAFAC class translation factor GTPase superfamily. Classic translation factor GTPase family. LepA subfamily.

It is found in the cell inner membrane. The enzyme catalyses GTP + H2O = GDP + phosphate + H(+). Functionally, required for accurate and efficient protein synthesis under certain stress conditions. May act as a fidelity factor of the translation reaction, by catalyzing a one-codon backward translocation of tRNAs on improperly translocated ribosomes. Back-translocation proceeds from a post-translocation (POST) complex to a pre-translocation (PRE) complex, thus giving elongation factor G a second chance to translocate the tRNAs correctly. Binds to ribosomes in a GTP-dependent manner. The protein is Elongation factor 4 of Variovorax paradoxus (strain S110).